The following is a 152-amino-acid chain: Deoxyuridine 5'-triphosphate nucleotidohydrolase (152 aa).

Substrate is bound by residues 71–73 (RSG), Asn84, 88–90 (LID), and Met98.

The protein belongs to the dUTPase family. Mg(2+) is required as a cofactor.

It carries out the reaction dUTP + H2O = dUMP + diphosphate + H(+). The protein operates within pyrimidine metabolism; dUMP biosynthesis; dUMP from dCTP (dUTP route): step 2/2. Its function is as follows. This enzyme is involved in nucleotide metabolism: it produces dUMP, the immediate precursor of thymidine nucleotides and it decreases the intracellular concentration of dUTP so that uracil cannot be incorporated into DNA. This is Deoxyuridine 5'-triphosphate nucleotidohydrolase from Hahella chejuensis (strain KCTC 2396).